Consider the following 308-residue polypeptide: uncharacterized protein (308 aa).

Residues 11-87 (KRLDSLLASL…LKLEVLFEDK (77 aa)) form the S4 RNA-binding domain. The active site involves aspartate 131.

It belongs to the pseudouridine synthase RluA family.

The enzyme catalyses a uridine in RNA = a pseudouridine in RNA. This is an uncharacterized protein from Mycoplasma genitalium (strain ATCC 33530 / DSM 19775 / NCTC 10195 / G37) (Mycoplasmoides genitalium).